The sequence spans 1356 residues: Transmembrane protein 94 (1356 aa).

Topologically, residues 1 to 64 (MDLKEKHLGE…FLHHSNRCSC (64 aa)) are cytoplasmic. A helical transmembrane segment spans residues 65–85 (FHWPGASLMLLAVLLLLGCCG). At 86 to 92 (GQPAGSR) the chain is on the lumenal side. A helical membrane pass occupies residues 93-113 (GVGLVNASALFLLLLLNLVLI). At 114–273 (GRQDRLKRRE…RPVTALDNER (160 aa)) the chain is on the cytoplasmic side. 2 positions are modified to phosphoserine: serine 221 and serine 225. A helical transmembrane segment spans residues 274-294 (FTVQSVMLHYAVPVVLAGFLI). The Lumenal portion of the chain corresponds to 295 to 320 (TNALRFIFSAPGVTSWQYTLLQLQVN). The chain crosses the membrane as a helical span at residues 321–341 (GVLPILPLLFPVLWVLATACG). Topologically, residues 342 to 1092 (EARVLAQMSK…RHATYGIRKC (751 aa)) are cytoplasmic. The DKQGIL motif lies at 417–422 (DKQGIL). Disordered regions lie at residues 439-461 (VEPP…FCHP) and 483-541 (EQER…ESDP). Residues 440–449 (EPPHSSHEDL) show a composition bias toward basic and acidic residues. Phosphoserine occurs at positions 444, 445, and 454. Residues 502–511 (HHKAHGRSKH) are compositionally biased toward basic residues. Residues serine 513, serine 518, serine 798, and serine 941 each carry the phosphoserine modification. A helical transmembrane segment spans residues 1093 to 1113 (FLFLLQCQLTLVVIQFLSCLV). Residues 1114 to 1120 (QLPPLLS) are Lumenal-facing. A helical membrane pass occupies residues 1121–1141 (TTDILWLSCFCYPLLSISLLG). Residues 1142–1167 (KPPHSSIMSMATGKNLQSIPKKTQHY) lie on the Cytoplasmic side of the membrane. The helical transmembrane segment at 1168-1188 (FLLCFLLKFSLTISSCLICFG) threads the bilayer. At 1189 to 1228 (FTLQSFCDSSRDRNLTNCSSVMLPSNDDRAPAWFEDFANG) the chain is on the lumenal side. N-linked (GlcNAc...) asparagine glycosylation is found at asparagine 1202 and asparagine 1205. The chain crosses the membrane as a helical span at residues 1229–1249 (LLSAQKLTAALIVLHTVFISI). Residues 1250-1261 (THVHRTKPLWRK) lie on the Cytoplasmic side of the membrane. The chain crosses the membrane as a helical span at residues 1262 to 1282 (SPLTNLWWAVTVPVVLLGQVV). At 1283–1306 (QTAVDLQLWTHRDSHVHFGLEDVP) the chain is on the lumenal side. The chain crosses the membrane as a helical span at residues 1307–1327 (LLTWLLGCLSLVLVVVTNEIV). Over 1328 to 1356 (KLHEIRVRVRYQKRQKLQFETKLGMNSPF) the chain is Cytoplasmic. The short motif at 1351-1353 (GMN) is the GMN; metal-binding motif element.

As to quaternary structure, forms homooligomers. As to expression, expressed ubiquitously.

The protein localises to the endoplasmic reticulum membrane. Functionally, could function in the uptake of Mg(2+) from the cytosol into the endoplasmic reticulum and regulate intracellular Mg(2+) homeostasis. This chain is Transmembrane protein 94, found in Homo sapiens (Human).